We begin with the raw amino-acid sequence, 169 residues long: MHVWLILSLASLWTSSIAYSQFLFSMSTGPFICTVKDNQVFVANLPWTMLEGDDIQVGKEFAARVEDCTNVKHDMAPTCTKPPPFCGPQDMKMFNFVGCSVLGNKLFIDQKYVRDLTAKDHAEVQTFREKIAAFEEQQENQPPSSGMPHGAVPAGGLSPPPPPSFCTVQ.

A signal peptide spans 1-20 (MHVWLILSLASLWTSSIAYS). Pyrrolidone carboxylic acid is present on Q21. Cystine bridges form between C33–C79, C68–C86, and C99–C166. The tract at residues 135–169 (EEQQENQPPSSGMPHGAVPAGGLSPPPPPSFCTVQ) is disordered. A compositionally biased stretch (pro residues) spans 158–169 (SPPPPPSFCTVQ).

This sequence belongs to the protease inhibitor I33 family. As to expression, body wall.

Its subcellular location is the secreted. This is an inhibitor of the aspartic protease pepsin. The sequence is that of Major pepsin inhibitor 3 from Ascaris suum (Pig roundworm).